The primary structure comprises 361 residues: sn-glycerol-3-phosphate import ATP-binding protein UgpC (361 aa).

Residues 4 to 235 (LSLKGVRKSY…PATVFVAGFI (232 aa)) enclose the ABC transporter domain. ATP is bound at residue 37–44 (GPSGCGKS).

This sequence belongs to the ABC transporter superfamily. sn-glycerol-3-phosphate importer (TC 3.A.1.1.3) family. The complex is composed of two ATP-binding proteins (UgpC), two transmembrane proteins (UgpA and UgpE) and a solute-binding protein (UgpB).

The protein localises to the cell inner membrane. The catalysed reaction is sn-glycerol 3-phosphate(out) + ATP + H2O = sn-glycerol 3-phosphate(in) + ADP + phosphate + H(+). Its function is as follows. Part of the ABC transporter complex UgpBAEC involved in sn-glycerol-3-phosphate (G3P) import. Responsible for energy coupling to the transport system. This Burkholderia cenocepacia (strain HI2424) protein is sn-glycerol-3-phosphate import ATP-binding protein UgpC.